Consider the following 623-residue polypeptide: Regulatory solute carrier protein family 1 member 1 (623 aa).

Composition is skewed to polar residues over residues 1–16 (MSSLPTSDGFNHQAHP), 83–99 (CASSADNAPANQTPAIP), and 133–144 (EASLSVTTTRMQ). Disordered regions lie at residues 1–48 (MSSL…PDSI), 71–99 (RKEQLPLQDPSDCASSADNAPANQTPAIP), 116–189 (SAEG…APHD), and 433–493 (EELT…PHCT). Basic and acidic residues-rich tracts occupy residues 150–159 (IGEKGWHPEY), 170–180 (QHEEPRNEQHE), and 460–473 (LVDKENVPRSRESV). The span at 474–491 (NESSLVTLDSAKTSNQPH) shows a compositional bias: polar residues. The UBA domain maps to 577-617 (IFPAADIDRILRAGFTLQEALGALHRVGGNADLALLVLLAK).

Interacts with YRDC. In terms of tissue distribution, renal outer cortex and outer medulla, small intestine and liver.

The protein resides in the cell membrane. It localises to the nucleus. The protein localises to the golgi apparatus. It is found in the trans-Golgi network. In terms of biological role, mediates transcriptional and post-transcriptional regulation of SLC5A1. Inhibits a dynamin and PKC-dependent exocytotic pathway of SLC5A1. Also involved in transcriptional regulation of SLC22A2. Exhibits glucose-dependent, short-term inhibition of SLC5A1 and SLC22A2 by inhibiting the release of vesicles from the trans-Golgi network. The polypeptide is Regulatory solute carrier protein family 1 member 1 (RSC1A1) (Sus scrofa (Pig)).